The chain runs to 300 residues: Light-independent protochlorophyllide reductase iron-sulfur ATP-binding protein (300 aa).

Residues 10–15 (GIGKST) and Lys39 each bind ATP. Mg(2+) is bound at residue Ser14. Cys95 and Cys129 together coordinate [4Fe-4S] cluster. An ATP-binding site is contributed by 180–181 (NR).

The protein belongs to the NifH/BchL/ChlL family. In terms of assembly, homodimer. Protochlorophyllide reductase is composed of three subunits; ChlL, ChlN and ChlB. [4Fe-4S] cluster is required as a cofactor.

The protein localises to the plastid. It localises to the chloroplast. The catalysed reaction is chlorophyllide a + oxidized 2[4Fe-4S]-[ferredoxin] + 2 ADP + 2 phosphate = protochlorophyllide a + reduced 2[4Fe-4S]-[ferredoxin] + 2 ATP + 2 H2O. Its pathway is porphyrin-containing compound metabolism; chlorophyll biosynthesis (light-independent). Its function is as follows. Component of the dark-operative protochlorophyllide reductase (DPOR) that uses Mg-ATP and reduced ferredoxin to reduce ring D of protochlorophyllide (Pchlide) to form chlorophyllide a (Chlide). This reaction is light-independent. The L component serves as a unique electron donor to the NB-component of the complex, and binds Mg-ATP. This chain is Light-independent protochlorophyllide reductase iron-sulfur ATP-binding protein, found in Auxenochlorella protothecoides (Green microalga).